A 453-amino-acid polypeptide reads, in one-letter code: Glutamyl-tRNA reductase (453 aa).

Substrate contacts are provided by residues 50–53 (TCNR), Ser-110, 115–117 (EPQ), and Gln-121. Cys-51 acts as the Nucleophile in catalysis. 190–195 (GAGEMA) lines the NADP(+) pocket. Basic and acidic residues predominate over residues 423-436 (REKVPTDAHADRKP). Residues 423–453 (REKVPTDAHADRKPPNFAETSDDFDVTDASE) form a disordered region. Acidic residues predominate over residues 442 to 453 (TSDDFDVTDASE).

Belongs to the glutamyl-tRNA reductase family. Homodimer.

It catalyses the reaction (S)-4-amino-5-oxopentanoate + tRNA(Glu) + NADP(+) = L-glutamyl-tRNA(Glu) + NADPH + H(+). It participates in porphyrin-containing compound metabolism; protoporphyrin-IX biosynthesis; 5-aminolevulinate from L-glutamyl-tRNA(Glu): step 1/2. Catalyzes the NADPH-dependent reduction of glutamyl-tRNA(Glu) to glutamate 1-semialdehyde (GSA). The polypeptide is Glutamyl-tRNA reductase (Solidesulfovibrio magneticus (strain ATCC 700980 / DSM 13731 / RS-1) (Desulfovibrio magneticus)).